The chain runs to 136 residues: Small ribosomal subunit protein eS8 (136 aa).

It belongs to the eukaryotic ribosomal protein eS8 family. In terms of assembly, part of the 30S ribosomal subunit.

The sequence is that of Small ribosomal subunit protein eS8 (rps8e) from Aeropyrum pernix (strain ATCC 700893 / DSM 11879 / JCM 9820 / NBRC 100138 / K1).